A 428-amino-acid chain; its full sequence is Histidine--tRNA ligase (428 aa).

The protein belongs to the class-II aminoacyl-tRNA synthetase family. In terms of assembly, homodimer.

Its subcellular location is the cytoplasm. The enzyme catalyses tRNA(His) + L-histidine + ATP = L-histidyl-tRNA(His) + AMP + diphosphate + H(+). This Chromohalobacter salexigens (strain ATCC BAA-138 / DSM 3043 / CIP 106854 / NCIMB 13768 / 1H11) protein is Histidine--tRNA ligase.